A 276-amino-acid chain; its full sequence is Glutamate racemase (276 aa).

Substrate-binding positions include 10–11 (DS) and 42–43 (YG). Catalysis depends on Cys74, which acts as the Proton donor/acceptor. Position 75–76 (75–76 (NT)) interacts with substrate. Cys185 serves as the catalytic Proton donor/acceptor. Residue 186–187 (TH) participates in substrate binding.

It belongs to the aspartate/glutamate racemases family.

The enzyme catalyses L-glutamate = D-glutamate. The protein operates within cell wall biogenesis; peptidoglycan biosynthesis. Its function is as follows. Provides the (R)-glutamate required for cell wall biosynthesis. The chain is Glutamate racemase from Levilactobacillus brevis (strain ATCC 367 / BCRC 12310 / CIP 105137 / JCM 1170 / LMG 11437 / NCIMB 947 / NCTC 947) (Lactobacillus brevis).